The chain runs to 348 residues: D-alanine--D-alanine ligase (348 aa).

The region spanning 132-334 is the ATP-grasp domain; sequence KRVLESIGIP…YPDLIEVLVT (203 aa). 162 to 217 lines the ATP pocket; it reads LARLTFPIFVKPANMGSSVGISKAQTKVELRKAIQLALTYDSRVLIEQGVVAREIE. Residues aspartate 288, glutamate 301, and asparagine 303 each contribute to the Mg(2+) site.

Belongs to the D-alanine--D-alanine ligase family. Requires Mg(2+) as cofactor. Mn(2+) is required as a cofactor.

It is found in the cytoplasm. The enzyme catalyses 2 D-alanine + ATP = D-alanyl-D-alanine + ADP + phosphate + H(+). Its pathway is cell wall biogenesis; peptidoglycan biosynthesis. Functionally, cell wall formation. This chain is D-alanine--D-alanine ligase, found in Streptococcus pyogenes serotype M2 (strain MGAS10270).